Here is a 195-residue protein sequence, read N- to C-terminus: Rho-related protein racB (195 aa).

Gly10 to Thr17 contacts GTP. An Effector region motif is present at residues Tyr32 to Tyr40. GTP-binding positions include Asp57–Gln61 and Thr115–Asp118. Residue Cys192 is modified to Cysteine methyl ester. Cys192 is lipidated: S-geranylgeranyl cysteine. The propeptide at Ser193–Leu195 is removed in mature form.

It belongs to the small GTPase superfamily. Rho family. In terms of assembly, interacts with pakB.

Its subcellular location is the cell membrane. This Dictyostelium discoideum (Social amoeba) protein is Rho-related protein racB (racB).